A 57-amino-acid chain; its full sequence is Temporin-ALk (57 aa).

The N-terminal stretch at 1-22 (MFTLKKSLLLLFFLGTINLSLC) is a signal peptide. A propeptide spanning residues 23–46 (EQERNAEEERRDDLGERQAEVEKR) is cleaved from the precursor. Ser-56 is subject to Serine amide.

It belongs to the frog skin active peptide (FSAP) family. Temporin subfamily. In terms of tissue distribution, expressed by the skin glands.

It is found in the secreted. Functionally, antimicrobial peptide with weak activity against Gram-positive and Gram-negative bacteria and against fungi. Has been tested against S.aureus (MIC=15.0 ug/mL), B.pumilus (no activity detected), B.cereus (no activity detected), E.coli (MIC=30.0 ug/mL), B.dysenteriae (MIC=60.0 ug/mL), A.cacoaceticus (MIC=75.0 ug/mL), P.aeruginosa (MIC=25.0 ug/mL) and C.albicans (MIC=15.0 ug/mL). Also shows a weak hemolytic activity. This is Temporin-ALk from Amolops loloensis (Lolokou Sucker Frog).